Reading from the N-terminus, the 170-residue chain is ATP synthase subunit b (170 aa).

Residues 30–50 (FFFVLAIFLVVLAVIGTFVVP) form a helical membrane-spanning segment.

The protein belongs to the ATPase B chain family. In terms of assembly, F-type ATPases have 2 components, F(1) - the catalytic core - and F(0) - the membrane proton channel. F(1) has five subunits: alpha(3), beta(3), gamma(1), delta(1), epsilon(1). F(0) has three main subunits: a(1), b(2) and c(10-14). The alpha and beta chains form an alternating ring which encloses part of the gamma chain. F(1) is attached to F(0) by a central stalk formed by the gamma and epsilon chains, while a peripheral stalk is formed by the delta and b chains.

It localises to the cell membrane. Its function is as follows. F(1)F(0) ATP synthase produces ATP from ADP in the presence of a proton or sodium gradient. F-type ATPases consist of two structural domains, F(1) containing the extramembraneous catalytic core and F(0) containing the membrane proton channel, linked together by a central stalk and a peripheral stalk. During catalysis, ATP synthesis in the catalytic domain of F(1) is coupled via a rotary mechanism of the central stalk subunits to proton translocation. In terms of biological role, component of the F(0) channel, it forms part of the peripheral stalk, linking F(1) to F(0). The polypeptide is ATP synthase subunit b (Mycobacterium marinum (strain ATCC BAA-535 / M)).